The sequence spans 709 residues: MSKTFAEIAETFLEPEAVRIAKEAVEEYGDHERKIIQIGIHFQVCCMFCDEYLSTNGSDRFVLIEGRKRGTAVSLQNELCKSYDLEPLPFLCDIFDREEKQFVEIGITRKADDSYFQSKFGKLGNSCKIFVFSYDGRLDKNCEGPMEEQKLRIFSFLATAADFLRKENMFNEIFLPDNEETIIEMKKGKTFLKLRDESVPLPFQTYEQMKDYCEKFKGNPRELASKVSQMQSNIKLPIKHYEQNKFRQIRLPKGPMAPYTHKFLMEEAWMFTKISDPERSRAGEILIDFFKKGNLSAIRPKDKPLQGKYPIHYKNLWNQIKAAIADRTMVISENDHSEFLGGIGRASKKIPEVSLTQDVITTEGLKQSENKLPEPRSFPKWFNAEWMWAIKDSDLTGWVPMAEYPPADNELEDYAEHLNKTMEGVLQGTNCAREMGKCILTVGALMTECRLFPGKIKVVPIYARSKERKSMQEGLPVPSEMDCLFGICVKSKSHLNKDDGMYTIITFEFSIREPNLEKHQKYTVFEAGHTTVRMKKGESVIGREVPLYLYCRTTALSKIKNDWLSKARRCFITTMDTVETICLRESAKAEENLVEKTLNEKQMWIGKKNGELIAQPLREALRVQLVQQFYFCIYNDSQLEGFCNEQKKILMALEGDKKNKSSFGFNPEGLLEKIEECLINNPMCLFMAQRLNELVIEASKRGAKFFKID.

The Mn(2+) site is built by H41, E65, D93, E104, and I105. The short motif at 109-124 is the Nuclear localization signal 1 (NLS1) element; it reads RKADDSYFQSKFGKLG. The Nuclear localization signal 2 (NLS2) signature appears at 166 to 228; that stretch reads KENMFNEIFL…NPRELASKVS (63 aa).

This sequence belongs to the influenza viruses PA family. Influenza RNA polymerase is composed of three subunits: PB1, PB2 and PA. Interacts (via C-terminus) with PB1 (via N-terminus). It depends on Mn(2+) as a cofactor. In terms of processing, phosphorylated on serines and threonines by host kinases, including human casein kinase II.

The protein resides in the host cytoplasm. It localises to the host nucleus. Functionally, plays an essential role in viral RNA transcription and replication by forming the heterotrimeric polymerase complex together with PB1 and PB2 subunits. The complex transcribes viral mRNAs by using a unique mechanism called cap-snatching. It consists in the hijacking and cleavage of host capped pre-mRNAs. These short capped RNAs are then used as primers for viral mRNAs. The PB2 subunit is responsible for the binding of the 5' cap of cellular pre-mRNAs which are subsequently cleaved after 10-13 nucleotides by the PA subunit that carries the endonuclease activity. This chain is Polymerase acidic protein, found in Influenza C virus (strain C/JJ/1950).